Reading from the N-terminus, the 21-residue chain is Trypsin (21 aa).

It belongs to the peptidase S1 family.

It localises to the secreted. Its subcellular location is the extracellular space. The catalysed reaction is Preferential cleavage: Arg-|-Xaa, Lys-|-Xaa.. The chain is Trypsin from Apis mellifera scutellata (Africanized honey bee).